A 60-amino-acid polypeptide reads, in one-letter code: Putative per-hexamer repeat protein 1 (60 aa).

The polypeptide is Putative per-hexamer repeat protein 1 (Phxr1) (Mus musculus (Mouse)).